The chain runs to 77 residues: Apelin (77 aa).

The first 22 residues, 1–22 (MNLRRCVQALLLLWLCLSAVCG), serve as a signal peptide directing secretion. A propeptide spanning residues 23–41 (GPLLQTSDGKEMEEGTIRY) is cleaved from the precursor. The interval 43 to 77 (VQPRGPRSGPGPWQGGRRKFRRQRPRLSHKGPMPF) is disordered. Residues 58 to 71 (GRRKFRRQRPRLSH) are compositionally biased toward basic residues. Q65 carries the post-translational modification Pyrrolidone carboxylic acid.

This sequence belongs to the apelin family. Post-translationally, at least 5 active peptides may be produced by proteolytic processing of the peptide precursor.

It is found in the secreted. The protein resides in the extracellular space. Functionally, peptide hormone that functions as endogenous ligand for the G-protein-coupled apelin receptor (APLNR/APJ), that plays a role in cadiovascular homeostasis. Functions as a balanced agonist activating both G(i) protein pathway and beta-arrestin pathway of APLNR. Downstream G proteins activation, apelin can inhibit cAMP production and activate key intracellular effectors such as ERKs. On the other hand, APLNR activation induces beta-arrestin recruitment to the membrane leading to desensitization and internalization of the receptor. Apelin blunts cardiac hypertrophic induction from APLNR on response to pathological stimuli, but also induces myocardial hypertrophy under normal conditions. Apelin-36 dissociates more hardly than (pyroglu)apelin-13 from APLNR. Involved in the regulation of cardiac precursor cell movements during gastrulation and heart morphogenesis. Has an inhibitory effect on cytokine production in response to T-cell receptor/CD3 cross-linking; the oral intake of apelin in the colostrum and the milk might therefore modulate immune responses in neonates. Plays a role in early coronary blood vessels formation. Mediates myocardial contractility in an ERK1/2-dependent manner. May also have a role in the central control of body fluid homeostasis by influencing vasopressin release and drinking behavior. The polypeptide is Apelin (APLN) (Bos taurus (Bovine)).